A 162-amino-acid polypeptide reads, in one-letter code: Putative pre-16S rRNA nuclease (162 aa).

This sequence belongs to the YqgF nuclease family.

It localises to the cytoplasm. Functionally, could be a nuclease involved in processing of the 5'-end of pre-16S rRNA. The polypeptide is Putative pre-16S rRNA nuclease (Brucella melitensis biotype 2 (strain ATCC 23457)).